The primary structure comprises 202 residues: Pyrrolidone-carboxylate peptidase (202 aa).

Catalysis depends on residues E78, C141, and H165.

It belongs to the peptidase C15 family. As to quaternary structure, homotetramer.

The protein resides in the cytoplasm. The enzyme catalyses Release of an N-terminal pyroglutamyl group from a polypeptide, the second amino acid generally not being Pro.. Its function is as follows. Removes 5-oxoproline from various penultimate amino acid residues except L-proline. This Thermosipho melanesiensis (strain DSM 12029 / CIP 104789 / BI429) protein is Pyrrolidone-carboxylate peptidase.